The chain runs to 159 residues: Transcription antitermination protein NusB (159 aa).

The protein belongs to the NusB family.

Its function is as follows. Involved in transcription antitermination. Required for transcription of ribosomal RNA (rRNA) genes. Binds specifically to the boxA antiterminator sequence of the ribosomal RNA (rrn) operons. The sequence is that of Transcription antitermination protein NusB from Stenotrophomonas maltophilia (strain K279a).